The sequence spans 344 residues: Cyanuric acid amidohydrolase (344 aa).

The tract at residues 1–91 is RU A; sequence MTVVDIVKRT…ASAFVGTDRP (91 aa). Substrate-binding positions include Arg51 and 71-72; that span reads SG. The tract at residues 97-232 is RU B; the sequence is ALVAAVGRTA…CHILVLGNSP (136 aa). Lys146 is an active-site residue. Substrate contacts are provided by residues Arg178 and 215-216; that span reads SS. The Nucleophile role is filled by Ser215. An RU C region spans residues 238-344; it reads LRAVHGVMRD…PVTVVYRVAS (107 aa). Glu276 contacts Mg(2+). Substrate-binding positions include Arg303 and 322 to 323; that span reads SG. Residues Ala325, Gln328, Gly329, Pro330, and Gly333 each coordinate Mg(2+).

The protein belongs to the cyclic amide hydrolase (CyAH) family. In terms of assembly, homotetramer.

It catalyses the reaction cyanurate + H2O = 1-carboxybiuret + H(+). The protein operates within xenobiotic degradation; atrazine degradation; biuret from cyanurate: step 1/1. With respect to regulation, inhibited by barbituric acid. In terms of biological role, responsible for the hydrolysis of cyanuric acid, an intermediate formed during catabolism of s-triazine based compounds in herbicides such as atrazine and polymers such as melamine. Catalyzes the hydrolytic opening of the s-triazine ring of cyanuric acid (2,4,6-trihydroxy-s-triazine) to yield carbon dioxide and carboxybiuret, which spontaneously decarboxylates to biuret. The chain is Cyanuric acid amidohydrolase from Pseudonocardia dioxanivorans (strain ATCC 55486 / DSM 44775 / JCM 13855 / CB1190).